The sequence spans 186 residues: Ribosome-recycling factor (186 aa).

Belongs to the RRF family.

Its subcellular location is the cytoplasm. In terms of biological role, responsible for the release of ribosomes from messenger RNA at the termination of protein biosynthesis. May increase the efficiency of translation by recycling ribosomes from one round of translation to another. The protein is Ribosome-recycling factor of Rickettsia akari (strain Hartford).